Consider the following 186-residue polypeptide: ATP synthase subunit delta (186 aa).

The protein belongs to the ATPase delta chain family. In terms of assembly, F-type ATPases have 2 components, F(1) - the catalytic core - and F(0) - the membrane proton channel. F(1) has five subunits: alpha(3), beta(3), gamma(1), delta(1), epsilon(1). F(0) has three main subunits: a(1), b(2) and c(10-14). The alpha and beta chains form an alternating ring which encloses part of the gamma chain. F(1) is attached to F(0) by a central stalk formed by the gamma and epsilon chains, while a peripheral stalk is formed by the delta and b chains.

It is found in the cellular chromatophore membrane. Functionally, f(1)F(0) ATP synthase produces ATP from ADP in the presence of a proton or sodium gradient. F-type ATPases consist of two structural domains, F(1) containing the extramembraneous catalytic core and F(0) containing the membrane proton channel, linked together by a central stalk and a peripheral stalk. During catalysis, ATP synthesis in the catalytic domain of F(1) is coupled via a rotary mechanism of the central stalk subunits to proton translocation. Its function is as follows. This protein is part of the stalk that links CF(0) to CF(1). It either transmits conformational changes from CF(0) to CF(1) or is implicated in proton conduction. The sequence is that of ATP synthase subunit delta from Rhodobacter capsulatus (Rhodopseudomonas capsulata).